We begin with the raw amino-acid sequence, 179 residues long: DELTA-miturgitoxin-Cp2a (179 aa).

The first 20 residues, 1-20, serve as a signal peptide directing secretion; it reads MKFSLFFGVLFLAILHSCLS. Positions 21-47 are excised as a propeptide; the sequence is ESEKDLTDEDHFRSSDSFLSEIQEESR. The Processing quadruplet motif signature appears at 44–47; the sequence is EESR. Disulfide bonds link Cys51–Cys66, Cys58–Cys75, Cys65–Cys88, Cys77–Cys86, Cys115–Cys130, Cys122–Cys139, Cys129–Cys158, and Cys141–Cys156. Val178 bears the Valine amide mark.

The protein belongs to the spider toxin CSTX family. Double-CSTX subfamily. In terms of processing, cleavage of the propeptide depends on the processing quadruplet motif (XXXR, with at least one of X being E). As to expression, expressed by the venom gland.

It is found in the secreted. Spider venom toxin that exhibits cytolytic activity by forming an alpha-helix across the membrane. Lethal to insect larvae. This chain is DELTA-miturgitoxin-Cp2a, found in Cheiracanthium punctorium (Yellow sac spider).